The sequence spans 252 residues: Redox-sensing transcriptional repressor Rex (252 aa).

Residues 26-65 (LYLRALTALSERSVPTVSSEELAAAAGVNSAKLRKDFSYL) constitute a DNA-binding region (H-T-H motif). Residue 100 to 105 (GIGNLG) participates in NAD(+) binding. The interval 222 to 252 (EAAAEGAIPAAASKESADKGPDGDVPAVMPA) is disordered.

It belongs to the transcriptional regulatory Rex family. Homodimer.

Its subcellular location is the cytoplasm. Its function is as follows. Modulates transcription in response to changes in cellular NADH/NAD(+) redox state. The protein is Redox-sensing transcriptional repressor Rex of Streptomyces avermitilis (strain ATCC 31267 / DSM 46492 / JCM 5070 / NBRC 14893 / NCIMB 12804 / NRRL 8165 / MA-4680).